Here is a 316-residue protein sequence, read N- to C-terminus: MRKRARIIYNPTSGKELFKRVLPDALIKLEKAGYETSAYATEKIGDATFEAERALESEYDLLIAAGGDGTLNEVVNGIAEQPNRPKLGVIPMGTVNDFGRALHLPSDIMGAIDVIIDGHTTKVDIGKMNNRYFINLAAGGKLTQVSYETPSKLKSIVGPFAYYIKGFEMLPQMKAVDVRIEYDDNIFQGEALLFLLGLTNSMAGFEKLVPDAKLDDGYFTLIIVEKANLAELGHIMTLASRGEHTKHPKVIYAKAKSINISSFTDMQLNVDGEYGGKLPANFLNLEQHIEIFTPKDVFNEELLENDTITDITPDKQ.

Residues 1 to 132 (MRKRARIIYN…VDIGKMNNRY (132 aa)) form the DAGKc domain. Residues 10–14 (NPTSG), Thr-41, 67–73 (GDGTLNE), and Thr-94 each bind ATP. 3 residues coordinate Mg(2+): Lys-213, Asp-216, and Tyr-218. The active-site Proton acceptor is Glu-273.

The protein belongs to the diacylglycerol/lipid kinase family. As to quaternary structure, homodimer. The cofactor is Mg(2+).

The enzyme catalyses a 1,2-diacyl-sn-glycerol + ATP = a 1,2-diacyl-sn-glycero-3-phosphate + ADP + H(+). Catalyzes the phosphorylation of diacylglycerol (DAG) into phosphatidic acid. Is a key enzyme involved in the production of lipoteichoic acid by reintroducing DAG formed from the breakdown of membrane phospholipids into the phosphatidylglycerol biosynthetic pathway. This chain is Diacylglycerol kinase (dagK), found in Staphylococcus epidermidis (strain ATCC 35984 / DSM 28319 / BCRC 17069 / CCUG 31568 / BM 3577 / RP62A).